A 252-amino-acid chain; its full sequence is Electron transfer flavoprotein subunit beta (252 aa).

It belongs to the ETF beta-subunit/FixA family. Heterodimer of an alpha and a beta subunit. The cofactor is AMP.

The protein resides in the cytoplasm. The protein operates within lipid metabolism; butanoate metabolism. Functionally, part of an electron transfer flavoprotein involved in syntrophic growth of S.wolfei with butyrate. Probably receives electrons from butyryl-CoA dehydrogenases, and transfers them to the membrane-bound quinone oxidoreductase Swol_0698. The polypeptide is Electron transfer flavoprotein subunit beta (Syntrophomonas wolfei subsp. wolfei (strain DSM 2245B / Goettingen)).